A 279-amino-acid polypeptide reads, in one-letter code: Tryptophan synthase alpha chain (279 aa).

Catalysis depends on proton acceptor residues E50 and D61.

Belongs to the TrpA family. As to quaternary structure, tetramer of two alpha and two beta chains.

It carries out the reaction (1S,2R)-1-C-(indol-3-yl)glycerol 3-phosphate + L-serine = D-glyceraldehyde 3-phosphate + L-tryptophan + H2O. The protein operates within amino-acid biosynthesis; L-tryptophan biosynthesis; L-tryptophan from chorismate: step 5/5. Functionally, the alpha subunit is responsible for the aldol cleavage of indoleglycerol phosphate to indole and glyceraldehyde 3-phosphate. This is Tryptophan synthase alpha chain from Rhizobium rhizogenes (strain K84 / ATCC BAA-868) (Agrobacterium radiobacter).